Here is a 689-residue protein sequence, read N- to C-terminus: 1,4-alpha-glucan-branching enzyme (689 aa).

Residues W93 and K128 each coordinate (1,4-alpha-D-glucosyl)n. Catalysis depends on D345, which acts as the Nucleophile. The Proton donor role is filled by E400.

This sequence belongs to the glycosyl hydrolase 13 family. GlgB subfamily.

Its subcellular location is the cytoplasm. It carries out the reaction Transfers a segment of a (1-&gt;4)-alpha-D-glucan chain to a primary hydroxy group in a similar glucan chain.. It participates in glycan biosynthesis; glycogen biosynthesis. Glycogen-branching enzyme participates in the glycogen biosynthetic process along with glycogenin and glycogen synthase. Generates alpha-1,6-glucosidic branches from alpha-1,4-linked glucose chains, to increase solubility of the glycogen polymer. The polypeptide is 1,4-alpha-glucan-branching enzyme (gbeA) (Aspergillus oryzae (strain ATCC 42149 / RIB 40) (Yellow koji mold)).